Reading from the N-terminus, the 345-residue chain is UDP-N-acetylenolpyruvoylglucosamine reductase (345 aa).

The FAD-binding PCMH-type domain occupies Leu25–Ala193. Arg169 is a catalytic residue. Ser237 acts as the Proton donor in catalysis. The active site involves Glu333.

This sequence belongs to the MurB family. Requires FAD as cofactor.

It localises to the cytoplasm. It catalyses the reaction UDP-N-acetyl-alpha-D-muramate + NADP(+) = UDP-N-acetyl-3-O-(1-carboxyvinyl)-alpha-D-glucosamine + NADPH + H(+). Its pathway is cell wall biogenesis; peptidoglycan biosynthesis. Cell wall formation. This chain is UDP-N-acetylenolpyruvoylglucosamine reductase, found in Pseudoalteromonas atlantica (strain T6c / ATCC BAA-1087).